Here is a 459-residue protein sequence, read N- to C-terminus: Putrescine aminotransferase (459 aa).

Residues 150-151 (GT) and Q274 contribute to the pyridoxal 5'-phosphate site. K300 carries the N6-(pyridoxal phosphate)lysine modification. T332 is a binding site for pyridoxal 5'-phosphate.

Belongs to the class-III pyridoxal-phosphate-dependent aminotransferase family. Putrescine aminotransferase subfamily. Pyridoxal 5'-phosphate serves as cofactor.

The catalysed reaction is an alkane-alpha,omega-diamine + 2-oxoglutarate = an omega-aminoaldehyde + L-glutamate. It carries out the reaction putrescine + 2-oxoglutarate = 1-pyrroline + L-glutamate + H2O. It catalyses the reaction cadaverine + 2-oxoglutarate = 5-aminopentanal + L-glutamate. Its pathway is amine and polyamine degradation; putrescine degradation; 4-aminobutanal from putrescine (transaminase route): step 1/1. Functionally, catalyzes the aminotransferase reaction from putrescine to 2-oxoglutarate, leading to glutamate and 4-aminobutanal, which spontaneously cyclizes to form 1-pyrroline. This is the first step in one of two pathways for putrescine degradation, where putrescine is converted into 4-aminobutanoate (gamma-aminobutyrate or GABA) via 4-aminobutanal. Also functions as a cadaverine transaminase in a a L-lysine degradation pathway to succinate that proceeds via cadaverine, glutarate and L-2-hydroxyglutarate. This Escherichia coli (strain SMS-3-5 / SECEC) protein is Putrescine aminotransferase.